Consider the following 527-residue polypeptide: Flagellar radial spoke protein 5 (527 aa).

Residues 1–22 (MSEPGEEPVAAPAGPAPDPVLN) are disordered. Residues 101 to 153 (RKWNELTIQAKQLEQEVAGLKGPDAEAKQAELENVKVQIADAEAAVAEVKQSF) adopt a coiled-coil conformation. Asymmetric dimethylarginine occurs at positions 191 and 366.

Belongs to the aldo/keto reductase family. Asymmetrically dimethylated at Arg-191 and Arg-366 during flagellum resorption. Probably methylated by PRMT1.

It is found in the cytoplasm. The protein localises to the cytoskeleton. Its subcellular location is the flagellum axoneme. Its function is as follows. Flagellar radial spokes contribute to the regulation of dynein arm activity and thus the pattern of flagellar bending. They consist of a thin stalk, which is attached to the a subfiber of the outer doublet microtubule, and a bulbous head, which is attached to the stalk and appears to interact with the projections from the central pair of microtubules. In Chlamydomonas reinhardtii (Chlamydomonas smithii), this protein is Flagellar radial spoke protein 5.